Reading from the N-terminus, the 100-residue chain is Small ribosomal subunit protein uS14c (100 aa).

Belongs to the universal ribosomal protein uS14 family. In terms of assembly, part of the 30S ribosomal subunit.

The protein localises to the plastid. It is found in the chloroplast. Binds 16S rRNA, required for the assembly of 30S particles. The polypeptide is Small ribosomal subunit protein uS14c (Lactuca sativa (Garden lettuce)).